Consider the following 351-residue polypeptide: UDP-N-acetylenolpyruvoylglucosamine reductase (351 aa).

Positions 11–213 (GVGGSIACFI…KQVRDQVLRI (203 aa)) constitute an FAD-binding PCMH-type domain. The active site involves Arg-158. Catalysis depends on Ser-239, which acts as the Proton donor. Glu-343 is a catalytic residue.

It belongs to the MurB family. FAD is required as a cofactor.

Its subcellular location is the cytoplasm. The catalysed reaction is UDP-N-acetyl-alpha-D-muramate + NADP(+) = UDP-N-acetyl-3-O-(1-carboxyvinyl)-alpha-D-glucosamine + NADPH + H(+). Its pathway is cell wall biogenesis; peptidoglycan biosynthesis. Functionally, cell wall formation. This is UDP-N-acetylenolpyruvoylglucosamine reductase from Tropheryma whipplei (strain Twist) (Whipple's bacillus).